The following is a 299-amino-acid chain: Xyloglucan endotransglucosylase protein 6 (299 aa).

An N-terminal signal peptide occupies residues Met-1–Gly-25. One can recognise a GH16 domain in the interval Gly-26–Tyr-219. Residue Glu-105 is the Nucleophile of the active site. Catalysis depends on Glu-109, which acts as the Proton donor. Glu-109 is a xyloglucan binding site. N-linked (GlcNAc...) asparagine glycosylation is present at Asn-113. Residues Gln-122–Asn-124, Asn-132–Glu-134, Asp-198–Trp-199, and Gly-203 each bind xyloglucan. 2 disulfide bridges follow: Cys-227–Cys-242 and Cys-281–Cys-294. Position 286 (Arg-286) interacts with xyloglucan.

This sequence belongs to the glycosyl hydrolase 16 family. XTH group 1 subfamily. Contains at least one intrachain disulfide bond essential for its enzymatic activity. Highest expression in ripe leaves after full expansion. Also expressed in fruits, and at a lower level in flowers and stems (picked at anthesis).

Its subcellular location is the secreted. It is found in the cell wall. The protein localises to the extracellular space. The protein resides in the apoplast. It catalyses the reaction breaks a beta-(1-&gt;4) bond in the backbone of a xyloglucan and transfers the xyloglucanyl segment on to O-4 of the non-reducing terminal glucose residue of an acceptor, which can be a xyloglucan or an oligosaccharide of xyloglucan.. Catalyzes xyloglucan endotransglycosylation (XET). Cleaves and religates xyloglucan polymers. Does not catalyze xyloglucan endohydrolysis (XEH). Probably involved in cell wall restructuring during postharvest fruit softening. This chain is Xyloglucan endotransglucosylase protein 6, found in Diospyros kaki (Kaki persimmon).